A 106-amino-acid chain; its full sequence is UPF0213 protein KPN78578_35340 (106 aa).

A GIY-YIG domain is found at 13-88; that stretch reads VCWFLYLIRT…KQLTKREKER (76 aa).

This sequence belongs to the UPF0213 family.

This Klebsiella pneumoniae subsp. pneumoniae (strain ATCC 700721 / MGH 78578) protein is UPF0213 protein KPN78578_35340.